Here is a 195-residue protein sequence, read N- to C-terminus: Imidazoleglycerol-phosphate dehydratase (195 aa).

It belongs to the imidazoleglycerol-phosphate dehydratase family.

Its subcellular location is the cytoplasm. It catalyses the reaction D-erythro-1-(imidazol-4-yl)glycerol 3-phosphate = 3-(imidazol-4-yl)-2-oxopropyl phosphate + H2O. It participates in amino-acid biosynthesis; L-histidine biosynthesis; L-histidine from 5-phospho-alpha-D-ribose 1-diphosphate: step 6/9. In Desulfosudis oleivorans (strain DSM 6200 / JCM 39069 / Hxd3) (Desulfococcus oleovorans), this protein is Imidazoleglycerol-phosphate dehydratase.